The primary structure comprises 433 residues: Meiotically up-regulated gene 131 protein (433 aa).

Over residues 401–412 the composition is skewed to polar residues; sequence LSSQGREISNTL. Positions 401 to 433 are disordered; the sequence is LSSQGREISNTLSRKRGAKGSNPFEIENMMPHA.

Belongs to the UPF0300 family.

The protein localises to the golgi apparatus. Has a role in meiosis. The protein is Meiotically up-regulated gene 131 protein (mug131) of Schizosaccharomyces pombe (strain 972 / ATCC 24843) (Fission yeast).